The chain runs to 183 residues: Protein CT_584 (183 aa).

The protein belongs to the chlamydial CPn_0803/CT_584/TC_0873 family.

The chain is Protein CT_584 from Chlamydia trachomatis serovar D (strain ATCC VR-885 / DSM 19411 / UW-3/Cx).